We begin with the raw amino-acid sequence, 638 residues long: Probable ATP-binding protein YheS (638 aa).

2 consecutive ABC transporter domains span residues 2 to 246 and 313 to 531; these read IIFS…AQQT and VMIE…STSE. Residues 34-41 and 349-356 each bind ATP; these read GKNGCGKS and GKNGAGKS. Residues 525–563 are disordered; sequence EQNSTSENKVSEKVGDNENSVQNRKEQKRREAELRQQTA. Residues 547-558 show a composition bias toward basic and acidic residues; sequence NRKEQKRREAEL.

It belongs to the ABC transporter superfamily. ABCF family. YheS subfamily.

Its function is as follows. Genetic data indicate it may be involved in ribosome assembly or function. This Haemophilus influenzae (strain ATCC 51907 / DSM 11121 / KW20 / Rd) protein is Probable ATP-binding protein YheS.